The sequence spans 260 residues: 5'-nucleotidase SurE (260 aa).

Asp13, Asp14, Ser44, and Asn102 together coordinate a divalent metal cation.

It belongs to the SurE nucleotidase family. A divalent metal cation serves as cofactor.

Its subcellular location is the cytoplasm. It carries out the reaction a ribonucleoside 5'-phosphate + H2O = a ribonucleoside + phosphate. Its function is as follows. Nucleotidase that shows phosphatase activity on nucleoside 5'-monophosphates. The chain is 5'-nucleotidase SurE from Christiangramia forsetii (strain DSM 17595 / CGMCC 1.15422 / KT0803) (Gramella forsetii).